Reading from the N-terminus, the 484-residue chain is Sucrose-6-phosphate hydrolase (484 aa).

Substrate contacts are provided by residues 48–51 (LLND), Gln67, 110–111 (YS), 168–169 (RD), and Glu223. Asp51 is an active-site residue.

This sequence belongs to the glycosyl hydrolase 32 family.

It localises to the cytoplasm. The catalysed reaction is Hydrolysis of terminal non-reducing beta-D-fructofuranoside residues in beta-D-fructofuranosides.. It functions in the pathway glycan biosynthesis; sucrose metabolism. Its function is as follows. Enables the bacterium to metabolize sucrose as a sole carbon source. The chain is Sucrose-6-phosphate hydrolase (scrB) from Vibrio alginolyticus.